The sequence spans 499 residues: Maturase K (499 aa).

Belongs to the intron maturase 2 family. MatK subfamily.

Its subcellular location is the plastid. The protein localises to the chloroplast. Usually encoded in the trnK tRNA gene intron. Probably assists in splicing its own and other chloroplast group II introns. The polypeptide is Maturase K (Gymnocladus dioicus (Kentucky coffee tree)).